The chain runs to 130 residues: Phosphoribosyl-AMP cyclohydrolase (130 aa).

Asp77 lines the Mg(2+) pocket. Cys78 contributes to the Zn(2+) binding site. The Mg(2+) site is built by Asp79 and Asp81. Positions 95 and 102 each coordinate Zn(2+).

Belongs to the PRA-CH family. In terms of assembly, homodimer. Requires Mg(2+) as cofactor. Zn(2+) is required as a cofactor.

It is found in the cytoplasm. It catalyses the reaction 1-(5-phospho-beta-D-ribosyl)-5'-AMP + H2O = 1-(5-phospho-beta-D-ribosyl)-5-[(5-phospho-beta-D-ribosylamino)methylideneamino]imidazole-4-carboxamide. It participates in amino-acid biosynthesis; L-histidine biosynthesis; L-histidine from 5-phospho-alpha-D-ribose 1-diphosphate: step 3/9. In terms of biological role, catalyzes the hydrolysis of the adenine ring of phosphoribosyl-AMP. The polypeptide is Phosphoribosyl-AMP cyclohydrolase (Pseudomonas entomophila (strain L48)).